The primary structure comprises 33 residues: pyr operon leader peptide (33 aa).

This is pyr operon leader peptide (pyrL) from Salmonella typhi.